The following is a 428-amino-acid chain: Stromal membrane-associated protein 2 (428 aa).

Residues 13 to 139 (QAVLGSLLSE…INTFRKEKDD (127 aa)) form the Arf-GAP domain. Residues 28–51 (CADCQAKGPRWASWNIGVFICIRC) form a C4-type zinc finger. Residues 161 to 172 (VKMPQKKEETQQ) show a composition bias toward basic and acidic residues. 2 disordered regions span residues 161–182 (VKMPQKKEETQQSRKSSPKSTE) and 222–258 (SRKVSGSMPTSGSAGSVPENLNLFPEPGGKGEEAGKK).

In terms of assembly, may interact with clathrin heavy chains.

Its function is as follows. GTPase activating protein. May play a role in clathrin-dependent retrograde transport from early endosomes to the trans-Golgi network. The chain is Stromal membrane-associated protein 2 (SMAP2) from Gallus gallus (Chicken).